The chain runs to 522 residues: uncharacterized protein (522 aa).

Residues 1-11 (MSSITSRVSSR) are compositionally biased toward low complexity. Positions 1-20 (MSSITSRVSSRSSHELTEKK) are disordered. The next 12 helical transmembrane spans lie at 69–89 (VLWK…MIQY), 116–136 (SMTT…AILM), 141–161 (LSYF…LMAA), 173–193 (FLAG…TAMW), 204–224 (LCWY…SYGL), 236–256 (YVFI…VFIP), 303–323 (VIMI…GVFS), 338–358 (AVLN…SGVL), 367–387 (LLIG…IWKI), 396–416 (LVGV…LSLI), 428–448 (VTSA…PQLF), and 462–482 (AMIV…GYYI).

Belongs to the major facilitator superfamily. Allantoate permease family.

The protein resides in the endoplasmic reticulum. It is found in the membrane. This is an uncharacterized protein from Schizosaccharomyces pombe (strain 972 / ATCC 24843) (Fission yeast).